We begin with the raw amino-acid sequence, 150 residues long: MSKRKTKEPKVDVVTLGPSVREGEQVFGVVHIFASFNDTFIHVTDLSGRETLVRITGGMKVKADRDESSPYAAMLAAQDVAQRCKELGITAMHVKLRATGGNKTKTPGPGAQSALRALARSGMKIGRIEDVTPIPTDSTRRKGGRRGRRL.

Phosphoserine is present on serine 19.

Belongs to the universal ribosomal protein uS11 family. In terms of assembly, interacts with AAK6.

It localises to the cytoplasm. The protein is Small ribosomal subunit protein uS11z (RPS14A) of Arabidopsis thaliana (Mouse-ear cress).